Consider the following 160-residue polypeptide: Phosphopantetheine adenylyltransferase (160 aa).

Threonine 10 contributes to the substrate binding site. ATP is bound by residues 10–11 (TF) and histidine 18. Substrate contacts are provided by lysine 42, leucine 74, and arginine 88. Residues 89-91 (GLR), glutamate 99, and 124-130 (NSFISST) contribute to the ATP site.

The protein belongs to the bacterial CoaD family. In terms of assembly, homohexamer. Mg(2+) serves as cofactor.

The protein resides in the cytoplasm. The enzyme catalyses (R)-4'-phosphopantetheine + ATP + H(+) = 3'-dephospho-CoA + diphosphate. It participates in cofactor biosynthesis; coenzyme A biosynthesis; CoA from (R)-pantothenate: step 4/5. Reversibly transfers an adenylyl group from ATP to 4'-phosphopantetheine, yielding dephospho-CoA (dPCoA) and pyrophosphate. This Pseudoalteromonas atlantica (strain T6c / ATCC BAA-1087) protein is Phosphopantetheine adenylyltransferase.